We begin with the raw amino-acid sequence, 368 residues long: MAIKSIASRLRGSRRFLSGFVAGAVVGAAGAGLAALQFFRSQGAEGALTGKQPDGSAEKAVLEQFGFPLTGTEARCYTNHALSYDQAKRVPRWVLEHISKSKIMGDADRKHCKFKPDPNIPPTFSAFNEDYVGSGWSRGHMAPAGNNKFSSKAMAETFYLSNIVPQDFDNNSGYWNRIEMYCRELTERFEDVWVVSGPLTLPQTRGDGKKIVSYQVIGEDNVAVPSHLYKVILARRSSVSTEPLALGAFVVPNEAIGFQPQLTEFQVSLQDLEKLSGLVFFPHLDRTSDIRNICSVDTCKLLDFQEFTLYLSTRKIEGARSVLRLEKIMENLKNAEIEPDDYFMSRYEKKLEELKAKEQSGTQIRKPS.

The transit peptide at 1 to 41 (MAIKSIASRLRGSRRFLSGFVAGAVVGAAGAGLAALQFFRS) directs the protein to the mitochondrion. The active-site Proton acceptor is the His-140. Asn-171 serves as a coordination point for a divalent metal cation.

This sequence belongs to the DNA/RNA non-specific endonuclease family. As to quaternary structure, homodimer. A divalent metal cation is required as a cofactor. As to expression, ubiquitous.

It localises to the mitochondrion inner membrane. Endo/exonuclease with nicking activity towards supercoiled DNA, a preference for single-stranded DNA and 5'-3' exonuclease activity. This is Nuclease EXOG, mitochondrial (EXOG) from Homo sapiens (Human).